A 631-amino-acid chain; its full sequence is tRNA uridine 5-carboxymethylaminomethyl modification enzyme MnmG (631 aa).

Residue 14-19 (GGGHAG) participates in FAD binding. 274 to 288 (GPRYCPSIEDKIHRF) contacts NAD(+).

This sequence belongs to the MnmG family. In terms of assembly, homodimer. Heterotetramer of two MnmE and two MnmG subunits. FAD is required as a cofactor.

Its subcellular location is the cytoplasm. In terms of biological role, NAD-binding protein involved in the addition of a carboxymethylaminomethyl (cmnm) group at the wobble position (U34) of certain tRNAs, forming tRNA-cmnm(5)s(2)U34. This is tRNA uridine 5-carboxymethylaminomethyl modification enzyme MnmG from Pseudomonas paraeruginosa (strain DSM 24068 / PA7) (Pseudomonas aeruginosa (strain PA7)).